The following is a 72-amino-acid chain: Inner membrane protein YmgF (72 aa).

At 1-9 (MNNSNNLDY) the chain is on the cytoplasmic side. A helical membrane pass occupies residues 10–30 (FTLYIIFSIAFMLITLLVILI). The Periplasmic portion of the chain corresponds to 31 to 34 (AKPS). The chain crosses the membrane as a helical span at residues 35 to 55 (TGLGEVLVTINLLNALVWLAI). Residues 56–72 (NLVNRLRERLVNHRDQQ) are Cytoplasmic-facing.

As to quaternary structure, interacts with FtsL, FtsQ, FtsI, FtsN, and probably many other cell division proteins.

It localises to the cell inner membrane. Its function is as follows. Could be involved in cell division. May participate in the stabilization of the cell divisome under specific conditions. The chain is Inner membrane protein YmgF (ymgF) from Escherichia coli (strain K12).